A 420-amino-acid polypeptide reads, in one-letter code: 2',3'-cyclic-nucleotide 3'-phosphodiesterase (420 aa).

Phosphoserine is present on Ser9. Position 110 is a phosphotyrosine (Tyr110). Ser169, Ser227, and Ser239 each carry phosphoserine. The active-site Proton acceptor is His250. Thr252 is a substrate binding site. His329 (proton donor) is an active-site residue. Thr331 provides a ligand contact to substrate. A Phosphoserine modification is found at Ser358. Cys417 carries the cysteine methyl ester modification. Cys417 carries S-farnesyl cysteine lipidation. Positions 418–420 (TII) are cleaved as a propeptide — removed in mature form.

It belongs to the 2H phosphoesterase superfamily. CNPase family. In terms of assembly, exists as monomers and homodimers.

The protein resides in the membrane. It is found in the melanosome. The enzyme catalyses a nucleoside 2',3'-cyclic phosphate + H2O = a nucleoside 2'-phosphate + H(+). Its function is as follows. Catalyzes the formation of 2'-nucleotide products from 2',3'-cyclic substrates. May participate in RNA metabolism in the myelinating cell, CNP is the third most abundant protein in central nervous system myelin. This chain is 2',3'-cyclic-nucleotide 3'-phosphodiesterase, found in Mus musculus (Mouse).